Here is a 69-residue protein sequence, read N- to C-terminus: DNA gyrase inhibitor YacG (69 aa).

Zn(2+) contacts are provided by Cys-7, Cys-10, Cys-26, and Cys-30.

The protein belongs to the DNA gyrase inhibitor YacG family. As to quaternary structure, interacts with GyrB. It depends on Zn(2+) as a cofactor.

Its function is as follows. Inhibits all the catalytic activities of DNA gyrase by preventing its interaction with DNA. Acts by binding directly to the C-terminal domain of GyrB, which probably disrupts DNA binding by the gyrase. The protein is DNA gyrase inhibitor YacG of Shewanella sp. (strain W3-18-1).